Reading from the N-terminus, the 257-residue chain is Phosphomannomutase (257 aa).

Residue D19 is the Nucleophile of the active site. Mg(2+)-binding residues include D19 and D21. Catalysis depends on D21, which acts as the Proton donor/acceptor. Residues R28, R133, R144, R151, S189, and D191 each contribute to the alpha-D-mannose 1-phosphate site. Residues D219, F231, D233, and T236 each coordinate Mg(2+).

It belongs to the eukaryotic PMM family. Homodimer.

It is found in the cytoplasm. The catalysed reaction is alpha-D-mannose 1-phosphate = D-mannose 6-phosphate. The protein operates within nucleotide-sugar biosynthesis; GDP-alpha-D-mannose biosynthesis; alpha-D-mannose 1-phosphate from D-fructose 6-phosphate: step 2/2. Involved in the synthesis of the GDP-mannose and dolichol-phosphate-mannose required for a number of critical mannosyl transfer reactions. This is Phosphomannomutase (pmm1) from Schizosaccharomyces pombe (strain 972 / ATCC 24843) (Fission yeast).